A 180-amino-acid polypeptide reads, in one-letter code: Large ribosomal subunit protein uL5c (180 aa).

Belongs to the universal ribosomal protein uL5 family. As to quaternary structure, part of the 50S ribosomal subunit; contacts the 5S rRNA.

The protein localises to the plastid. Its subcellular location is the chloroplast. Binds 5S rRNA, forms part of the central protuberance of the 50S subunit. The sequence is that of Large ribosomal subunit protein uL5c (rpl5) from Tupiella akineta (Green alga).